Here is a 300-residue protein sequence, read N- to C-terminus: m7GpppN-mRNA hydrolase NUDT17 (300 aa).

The 152-residue stretch at 88–239 folds into the Nudix hydrolase domain; that stretch reads SRGVDVGVAV…KECVQIPADL (152 aa). Positions 127–148 match the Nudix box motif; the sequence is GHVELDEKLLDAGLRELLEETG. Mg(2+)-binding residues include Glu142 and Glu146.

The protein belongs to the Nudix hydrolase family. Mg(2+) is required as a cofactor. Mn(2+) serves as cofactor.

The catalysed reaction is a 5'-end (N(7)-methyl 5'-triphosphoguanosine)-ribonucleoside in mRNA + H2O = N(7)-methyl-GDP + a 5'-end phospho-ribonucleoside in mRNA + 2 H(+). Its function is as follows. Acts as a decapping enzyme capable of hydrolyzing monomethylated capped RNAs (in vitro). Hydrolyzes monomethylated capped RNA after alpha and beta phosphates to form N(7)-methyl-GDP. Shows low activity towards unmethylated capped RNA. The polypeptide is m7GpppN-mRNA hydrolase NUDT17 (nudt17) (Danio rerio (Zebrafish)).